The sequence spans 93 residues: Consomatin G1 (93 aa).

The signal sequence occupies residues 1–22 (MQTAYWVMLMMMVCITAPLPEG). A propeptide spanning residues 23–69 (GKPNSGIRGLVPNDLTPQHTLRSLISRRQTDVLLDATLLTTPAPEQR) is cleaved from the precursor. An intrachain disulfide couples Cys-72 to Cys-77. Position 74 is a D-tryptophan (Trp-74). A propeptide spanning residues 79-93 (PRPYPWRRRDLNGKR) is cleaved from the precursor.

The protein belongs to the conotoxin C superfamily. Consomatin family. In terms of tissue distribution, expressed by the venom duct.

It localises to the secreted. Its function is as follows. Potently activates human somatostatin receptors (SSTR) with a specific activation of SSTR2 (EC(50)=2.6 nM). This chain is Consomatin G1, found in Conus geographus (Geography cone).